A 302-amino-acid polypeptide reads, in one-letter code: Recombination-associated protein RdgC (302 aa).

Belongs to the RdgC family.

It localises to the cytoplasm. Its subcellular location is the nucleoid. May be involved in recombination. The chain is Recombination-associated protein RdgC from Mannheimia succiniciproducens (strain KCTC 0769BP / MBEL55E).